We begin with the raw amino-acid sequence, 71 residues long: ATP synthase F(0) complex subunit e, mitochondrial (71 aa).

Residue K34 is modified to N6-acetyllysine. At S68 the chain carries Phosphoserine.

The protein belongs to the ATPase e subunit family. As to quaternary structure, component of the ATP synthase complex composed at least of ATP5F1A/subunit alpha, ATP5F1B/subunit beta, ATP5MC1/subunit c (homooctomer), MT-ATP6/subunit a, MT-ATP8/subunit 8, ATP5ME/subunit e, ATP5MF/subunit f, ATP5MG/subunit g, ATP5MK/subunit k, ATP5MJ/subunit j, ATP5F1C/subunit gamma, ATP5F1D/subunit delta, ATP5F1E/subunit epsilon, ATP5PF/subunit F6, ATP5PB/subunit b, ATP5PD/subunit d, ATP5PO/subunit OSCP. ATP synthase complex consists of a soluble F(1) head domain (subunits alpha(3) and beta(3)) - the catalytic core - and a membrane F(0) domain - the membrane proton channel (subunits c, a, 8, e, f, g, k and j). These two domains are linked by a central stalk (subunits gamma, delta, and epsilon) rotating inside the F1 region and a stationary peripheral stalk (subunits F6, b, d, and OSCP).

It is found in the mitochondrion. Its subcellular location is the mitochondrion inner membrane. Its function is as follows. Subunit e, of the mitochondrial membrane ATP synthase complex (F(1)F(0) ATP synthase or Complex V) that produces ATP from ADP in the presence of a proton gradient across the membrane which is generated by electron transport complexes of the respiratory chain. ATP synthase complex consist of a soluble F(1) head domain - the catalytic core - and a membrane F(1) domain - the membrane proton channel. These two domains are linked by a central stalk rotating inside the F(1) region and a stationary peripheral stalk. During catalysis, ATP synthesis in the catalytic domain of F(1) is coupled via a rotary mechanism of the central stalk subunits to proton translocation. In vivo, can only synthesize ATP although its ATP hydrolase activity can be activated artificially in vitro. Part of the complex F(0) domain. The chain is ATP synthase F(0) complex subunit e, mitochondrial from Sus scrofa (Pig).